A 640-amino-acid polypeptide reads, in one-letter code: Threonine--tRNA ligase (640 aa).

The TGS domain maps to methionine 1–threonine 61. The interval aspartate 242–proline 533 is catalytic. Zn(2+) contacts are provided by cysteine 333, histidine 384, and histidine 510.

Belongs to the class-II aminoacyl-tRNA synthetase family. In terms of assembly, homodimer. The cofactor is Zn(2+).

It is found in the cytoplasm. The catalysed reaction is tRNA(Thr) + L-threonine + ATP = L-threonyl-tRNA(Thr) + AMP + diphosphate + H(+). Functionally, catalyzes the attachment of threonine to tRNA(Thr) in a two-step reaction: L-threonine is first activated by ATP to form Thr-AMP and then transferred to the acceptor end of tRNA(Thr). Also edits incorrectly charged L-seryl-tRNA(Thr). The protein is Threonine--tRNA ligase of Stutzerimonas stutzeri (strain A1501) (Pseudomonas stutzeri).